Consider the following 444-residue polypeptide: Orexin receptor type 2 (444 aa).

Residues 1–10 (MSGTKLEDSP) show a composition bias toward basic and acidic residues. The interval 1 to 20 (MSGTKLEDSPPCRNWSSASE) is disordered. The Extracellular segment spans residues 1–54 (MSGTKLEDSPPCRNWSSASELNETQEPFLNPTDYDDEEFLRYLWREYLHPKEYE). N-linked (GlcNAc...) asparagine glycans are attached at residues asparagine 14 and asparagine 22. The interval 33 to 49 (DYDDEEFLRYLWREYLH) is required for response to orexin-A. Residues 55–75 (WVLIAGYIIVFVVALIGNVLV) form a helical membrane-spanning segment. Topologically, residues 76-88 (CVAVWKNHHMRTV) are cytoplasmic. The helical transmembrane segment at 89–110 (TNYFIVNLSLADVLVTITCLPA) threads the bilayer. Topologically, residues 111 to 127 (TLVVDITETWFFGQSLC) are extracellular. A disulfide bond links cysteine 127 and cysteine 210. Residues 128–150 (KVIPYLQTVSVSVSVLTLSCIAL) form a helical membrane-spanning segment. At 151 to 170 (DRWYAICHPLMFKSTAKRAR) the chain is on the cytoplasmic side. The helical transmembrane segment at 171–191 (NSIVIIWIVSCIIMIPQAIVM) threads the bilayer. Residues 192 to 222 (ECSTVFPGLANKTTLFTVCDERWGGEIYPKM) lie on the Extracellular side of the membrane. The N-linked (GlcNAc...) asparagine glycan is linked to asparagine 202. A helical transmembrane segment spans residues 223–243 (YHICFFLVTYMAPLCLMVLAY). Topologically, residues 244 to 304 (LQIFRKLWCR…QIRARRKTAR (61 aa)) are cytoplasmic. Residues 305–326 (MLMIVLLVFAICYLPISILNVL) traverse the membrane as a helical segment. Asparagine 324 is a binding site for suvorexant. Topologically, residues 327 to 342 (KRVFGMFAHTEDRETV) are extracellular. A helical membrane pass occupies residues 343-366 (YAWFTFSHWLVYANSAANPIIYNF). Residues 367 to 444 (LSGKFREEFK…ANGAGPLQNW (78 aa)) lie on the Cytoplasmic side of the membrane.

It belongs to the G-protein coupled receptor 1 family.

It is found in the cell membrane. Nonselective, high-affinity receptor for both orexin-A and orexin-B neuropeptides. Triggers an increase in cytoplasmic Ca(2+) levels in response to orexin-A binding. In Homo sapiens (Human), this protein is Orexin receptor type 2 (HCRTR2).